The chain runs to 171 residues: UPF0763 protein KHP_0657 (171 aa).

This sequence belongs to the UPF0763 family.

The polypeptide is UPF0763 protein KHP_0657 (Helicobacter pylori (strain 51)).